Reading from the N-terminus, the 481-residue chain is UDP-N-acetylmuramoyl-L-alanyl-D-glutamate--L-lysine ligase (481 aa).

S42 is a binding site for UDP-N-acetyl-alpha-D-muramoyl-L-alanyl-D-glutamate. ATP is bound at residue 118-124; it reads GTKGKTT. UDP-N-acetyl-alpha-D-muramoyl-L-alanyl-D-glutamate is bound by residues 160–161, S187, and R195; that span reads TT. Position 229 is an N6-carboxylysine (K229). Residues 404 to 407 carry the L-lysine recognition motif motif; it reads DDPN.

The protein belongs to the MurCDEF family. MurE subfamily. Carboxylation is probably crucial for Mg(2+) binding and, consequently, for the gamma-phosphate positioning of ATP.

It is found in the cytoplasm. It carries out the reaction UDP-N-acetyl-alpha-D-muramoyl-L-alanyl-D-glutamate + L-lysine + ATP = UDP-N-acetyl-alpha-D-muramoyl-L-alanyl-gamma-D-glutamyl-L-lysine + ADP + phosphate + H(+). It participates in cell wall biogenesis; peptidoglycan biosynthesis. In terms of biological role, catalyzes the addition of L-lysine to the nucleotide precursor UDP-N-acetylmuramoyl-L-alanyl-D-glutamate (UMAG) in the biosynthesis of bacterial cell-wall peptidoglycan. This chain is UDP-N-acetylmuramoyl-L-alanyl-D-glutamate--L-lysine ligase, found in Streptococcus pneumoniae (strain ATCC BAA-255 / R6).